Consider the following 327-residue polypeptide: GMP reductase (327 aa).

Cysteine 176 acts as the Thioimidate intermediate in catalysis. 205–228 provides a ligand contact to NADP(+); that stretch reads IIADGGIRTHGDIAKSIRFGASMV.

This sequence belongs to the IMPDH/GMPR family. GuaC type 2 subfamily.

The enzyme catalyses IMP + NH4(+) + NADP(+) = GMP + NADPH + 2 H(+). Functionally, catalyzes the irreversible NADPH-dependent deamination of GMP to IMP. It functions in the conversion of nucleobase, nucleoside and nucleotide derivatives of G to A nucleotides, and in maintaining the intracellular balance of A and G nucleotides. The protein is GMP reductase of Streptococcus pyogenes serotype M49 (strain NZ131).